We begin with the raw amino-acid sequence, 280 residues long: F-actin-capping protein subunit alpha (280 aa).

This sequence belongs to the F-actin-capping protein alpha subunit family. In terms of assembly, heterodimer of an alpha and a beta subunit.

The protein localises to the cytoplasm. The protein resides in the cytoskeleton. In terms of biological role, F-actin-capping proteins bind in a Ca(2+)-independent manner to the fast growing ends of actin filaments (barbed end) thereby blocking the exchange of subunits at these ends. Unlike other capping proteins (such as gelsolin and severin), these proteins do not sever actin filaments. This Candida albicans (strain SC5314 / ATCC MYA-2876) (Yeast) protein is F-actin-capping protein subunit alpha (CAP01).